The sequence spans 260 residues: Caveolae-associated protein 3 (260 aa).

The interval Met-1–Lys-84 is interaction with CAVIN1. The leucine-zipper stretch occupies residues Val-20–Leu-78. Residues Ser-62 and Ser-70 each carry the phosphoserine modification. Residue Lys-128 forms a Glycyl lysine isopeptide (Lys-Gly) (interchain with G-Cter in SUMO2) linkage. The interaction with CAV1 stretch occupies residues Ala-135–Thr-201. Positions Lys-140–Ala-260 are disordered. Residues Ala-157 to Pro-168 show a composition bias toward acidic residues. Phosphoserine occurs at positions 162, 163, and 171. Pro residues predominate over residues Thr-201–Leu-210.

It belongs to the CAVIN family. As to quaternary structure, component of the CAVIN complex composed of CAVIN1, CAVIN2, CAVIN3 and CAVIN4. Interacts with PRKCD and with phosphatidylserine. Phosphatidylserine may form a bridge between PKC and PKC-binding partners and stabilize the binding. Interacts with PER2. Interacts with CAVIN1 and EPS15L1. Interacts (via leucine-zipper domain) with CAV1 in a cholesterol-sensitive manner. In terms of processing, in vitro, phosphorylated by PRKCD.

Its subcellular location is the cytoplasm. It localises to the membrane. It is found in the caveola. The protein resides in the cytosol. Its function is as follows. Regulates the traffic and/or budding of caveolae. Plays a role in caveola formation in a tissue-specific manner. Required for the formation of caveolae in smooth muscle but not in the lung and heart endothelial cells. Regulates the equilibrium between cell surface-associated and cell surface-dissociated caveolae by promoting the rapid release of caveolae from the cell surface. Plays a role in the regulation of the circadian clock. Modulates the period length and phase of circadian gene expression and also regulates expression and interaction of the core clock components PER1/2 and CRY1/2. This is Caveolae-associated protein 3 (CAVIN3) from Bos taurus (Bovine).